Here is a 109-residue protein sequence, read N- to C-terminus: MEKKIKNFSSSLYMRRKARKTTAMTHSTISHVTNVKKAMIFFLLSFSHFSSGYSACKKKRRGSGLRYFGNKLWRPTPRSGQSGQSRPKTGPHGSQRVVFLELKKAQRWA.

Residues 67–96 form a disordered region; the sequence is YFGNKLWRPTPRSGQSGQSRPKTGPHGSQR. The segment covering 78–87 has biased composition (polar residues); that stretch reads RSGQSGQSRP.

This is an uncharacterized protein from Saccharomyces cerevisiae (strain ATCC 204508 / S288c) (Baker's yeast).